Here is a 690-residue protein sequence, read N- to C-terminus: Lipase 2 (690 aa).

Residues 1 to 37 (MLRGQEERKYSIRKYSIGVVSVLAATMFVVSSHEAQA) form the signal peptide. A propeptide spanning residues 38–295 (SEKTPTNAAV…ADAKKVRPLK (258 aa)) is cleaved from the precursor. Positions 53–71 (NQPGEQGNAITSHQMQSGK) are enriched in polar residues. Positions 53-266 (NQPGEQGNAI…KPTDKNTDNK (214 aa)) are disordered. Positions 72-81 (QLDDMHKENG) are enriched in basic and acidic residues. Polar residues-rich tracts occupy residues 93 to 114 (LQLSKYQSTQNSKTIRTQNDNQ), 124 to 171 (SKQS…QPSI), and 185 to 206 (PTSTTPPSNDKTAPKSTKAQDA). Basic and acidic residues-rich tracts occupy residues 225 to 237 (IDAKQDDTVRQSE) and 257 to 266 (KPTDKNTDNK). The active-site Nucleophile is S412. G579 contacts Ca(2+). The Charge relay system role is filled by D603. D644 lines the Ca(2+) pocket. The Charge relay system role is filled by H645. Residues D647, D652, and D655 each coordinate Ca(2+).

Belongs to the AB hydrolase superfamily. Lipase family.

The protein resides in the secreted. The enzyme catalyses a triacylglycerol + H2O = a diacylglycerol + a fatty acid + H(+). This is Lipase 2 (lip2) from Staphylococcus aureus (strain MSSA476).